The primary structure comprises 373 residues: Lipoyl synthase (373 aa).

A disordered region spans residues 12–36 (HVVSNDHPSSSPLQPGVKQSGEDKI). Cys81, Cys86, Cys92, Cys107, Cys111, Cys114, and Ser323 together coordinate [4Fe-4S] cluster. Residues 93–312 (FSHGTATFMI…EEYGMALGFS (220 aa)) enclose the Radical SAM core domain. The tract at residues 346 to 373 (PAVSSTEHRERHTIASKSASKTESIRHR) is disordered.

The protein belongs to the radical SAM superfamily. Lipoyl synthase family. The cofactor is [4Fe-4S] cluster.

It localises to the cytoplasm. It carries out the reaction [[Fe-S] cluster scaffold protein carrying a second [4Fe-4S](2+) cluster] + N(6)-octanoyl-L-lysyl-[protein] + 2 oxidized [2Fe-2S]-[ferredoxin] + 2 S-adenosyl-L-methionine + 4 H(+) = [[Fe-S] cluster scaffold protein] + N(6)-[(R)-dihydrolipoyl]-L-lysyl-[protein] + 4 Fe(3+) + 2 hydrogen sulfide + 2 5'-deoxyadenosine + 2 L-methionine + 2 reduced [2Fe-2S]-[ferredoxin]. It participates in protein modification; protein lipoylation via endogenous pathway; protein N(6)-(lipoyl)lysine from octanoyl-[acyl-carrier-protein]: step 2/2. In terms of biological role, catalyzes the radical-mediated insertion of two sulfur atoms into the C-6 and C-8 positions of the octanoyl moiety bound to the lipoyl domains of lipoate-dependent enzymes, thereby converting the octanoylated domains into lipoylated derivatives. This chain is Lipoyl synthase, found in Xylella fastidiosa (strain 9a5c).